The sequence spans 144 residues: Bacilliredoxin BrxA (144 aa).

Residues Cys-53 and Cys-55 each act as nucleophile in the active site. Cys-53 bears the S-bacillithiol cysteine disulfide mark. The short motif at 53–55 (CGC) is the CXC active site motif element. Cysteines 53 and 55 form a disulfide.

This sequence belongs to the bacilliredoxin family. N-terminal Cys of the CXC active site motif can react with bacillithiol (BSH) to form mixed disulfides. S-bacillithiolation protects Cys residues against overoxidation by acting as a redox switch in response to oxidative stress.

Functionally, S-bacillithiolation is the formation of mixed disulfide bonds between protein thiols and the general thiol reductant bacillithiol (BSH) under oxidative stress. BSH is an equivalent of glutathione (GSH) in Firmicutes. This protein is a dithiol bacilliredoxin, which debacillithiolates (removes BSH) the S-bacillithiolated OhrR (OhrR-SSB) in vitro and in vivo NaOCl-generated S-bacillithiolated MetE (MetE-SSB). Involved in maintaining redox homeostasis in response to disulfide stress conditions. Has a redox potential of -130 mV. Displays weak protein disulfide isomerase activity in vitro. The polypeptide is Bacilliredoxin BrxA (Bacillus subtilis (strain 168)).